The chain runs to 172 residues: Adenine phosphoribosyltransferase (172 aa).

It belongs to the purine/pyrimidine phosphoribosyltransferase family. Homodimer.

Its subcellular location is the cytoplasm. It carries out the reaction AMP + diphosphate = 5-phospho-alpha-D-ribose 1-diphosphate + adenine. It participates in purine metabolism; AMP biosynthesis via salvage pathway; AMP from adenine: step 1/1. Functionally, catalyzes a salvage reaction resulting in the formation of AMP, that is energically less costly than de novo synthesis. In Roseiflexus sp. (strain RS-1), this protein is Adenine phosphoribosyltransferase.